Reading from the N-terminus, the 876-residue chain is E3 ubiquitin-protein ligase TRIM71 (876 aa).

An RING-type zinc finger spans residues Cys-12–Asp-90. Residues Ser-26 to Gly-40 show a composition bias toward low complexity. 2 disordered regions span residues Ser-26 to Gly-46 and Lys-128 to Leu-192. Positions Pro-137–Ala-148 are enriched in gly residues. Low complexity predominate over residues Arg-160–Ser-182. The segment at Gln-200 to Phe-247 adopts a B box-type 1; atypical zinc-finger fold. Positions 205, 208, 229, 233, 286, 289, 309, and 314 each coordinate Zn(2+). The B box-type 2 zinc-finger motif lies at Glu-281 to Leu-322. Coiled coils occupy residues Arg-344–Lys-373 and Gln-399–Arg-434. One copy of the Filamin repeat lies at Ser-487–Val-588. 6 NHL repeats span residues Gly-601 to Cys-644, His-648 to Glu-691, Ile-695 to Asp-738, Leu-742 to Asp-785, Ala-789 to Asn-832, and Leu-836 to Phe-876.

This sequence belongs to the TRIM/RBCC family.

The protein resides in the cytoplasm. The protein localises to the P-body. It catalyses the reaction S-ubiquitinyl-[E2 ubiquitin-conjugating enzyme]-L-cysteine + [acceptor protein]-L-lysine = [E2 ubiquitin-conjugating enzyme]-L-cysteine + N(6)-ubiquitinyl-[acceptor protein]-L-lysine.. It participates in protein modification; protein ubiquitination. In terms of biological role, E3 ubiquitin-protein ligase that cooperates with the microRNAs (miRNAs) machinery and promotes embryonic stem cells proliferation and maintenance. Binds to miRNAs and participates in post-transcriptional repression of transcripts. Required to maintain proliferation and prevent premature differentiation of neural progenitor cells during early neural development. This is E3 ubiquitin-protein ligase TRIM71 (TRIM71) from Gallus gallus (Chicken).